A 252-amino-acid polypeptide reads, in one-letter code: tRNA (guanine-N(1)-)-methyltransferase (252 aa).

Residues Gly113 and 133-138 (IGDYVL) contribute to the S-adenosyl-L-methionine site.

It belongs to the RNA methyltransferase TrmD family. As to quaternary structure, homodimer.

It is found in the cytoplasm. The enzyme catalyses guanosine(37) in tRNA + S-adenosyl-L-methionine = N(1)-methylguanosine(37) in tRNA + S-adenosyl-L-homocysteine + H(+). In terms of biological role, specifically methylates guanosine-37 in various tRNAs. The sequence is that of tRNA (guanine-N(1)-)-methyltransferase from Xanthomonas campestris pv. campestris (strain 8004).